The sequence spans 112 residues: Reprimo-like protein (112 aa).

A helical membrane pass occupies residues 59-79 (VVQIAVLCVLSLTVLFGIFFL).

This sequence belongs to the reprimo family.

The protein resides in the membrane. The chain is Reprimo-like protein (rprml) from Xenopus laevis (African clawed frog).